The sequence spans 65 residues: Temporin-SN1 (65 aa).

Residues 1–22 (MFTTKKSLLLLFFLGTINLSLC) form the signal peptide. The propeptide at 23-44 (QEERNAEEERRDGDDEGGVEVQ) is removed in mature form. Position 65 is a lysine amide (Lys65).

This sequence belongs to the frog skin active peptide (FSAP) family. Temporin subfamily. As to expression, expressed by the skin glands.

It localises to the secreted. In terms of biological role, antimicrobial peptide. Active against a variety of Gram-positive bacterial strains. Not active against Gram-negative bacteria and against fungi. Shows hemolytic activity against human erythrocytes. In Sylvirana spinulosa (Fine-spined frog), this protein is Temporin-SN1.